The primary structure comprises 281 residues: Pantothenate synthetase (281 aa).

30–37 serves as a coordination point for ATP; it reads MGYLHEGH. His37 (proton donor) is an active-site residue. Gln61 is a binding site for (R)-pantoate. Gln61 contacts beta-alanine. 147–150 contributes to the ATP binding site; that stretch reads GQKD. (R)-pantoate is bound at residue Gln153. Residues Val176 and 184–187 contribute to the ATP site; that span reads MSSR.

Belongs to the pantothenate synthetase family. As to quaternary structure, homodimer.

The protein localises to the cytoplasm. The catalysed reaction is (R)-pantoate + beta-alanine + ATP = (R)-pantothenate + AMP + diphosphate + H(+). It participates in cofactor biosynthesis; (R)-pantothenate biosynthesis; (R)-pantothenate from (R)-pantoate and beta-alanine: step 1/1. Functionally, catalyzes the condensation of pantoate with beta-alanine in an ATP-dependent reaction via a pantoyl-adenylate intermediate. This is Pantothenate synthetase from Acetivibrio thermocellus (strain ATCC 27405 / DSM 1237 / JCM 9322 / NBRC 103400 / NCIMB 10682 / NRRL B-4536 / VPI 7372) (Clostridium thermocellum).